The chain runs to 66 residues: Large ribosomal subunit protein bL35 (66 aa).

It belongs to the bacterial ribosomal protein bL35 family.

In Treponema pallidum (strain Nichols), this protein is Large ribosomal subunit protein bL35.